We begin with the raw amino-acid sequence, 305 residues long: Homeobox protein NANOGP8 (305 aa).

The interval 1–96 (MSVDPACPQS…KEDKVPVKKQ (96 aa)) is disordered. Polar residues predominate over residues 65–82 (SPDSSTSPKGKQPTSAEN). A DNA-binding region (homeobox) is located at residues 95–154 (KQKTRTVFSSTQLCVLNDRFQRQKYLSLQQMQELSNILNLSYKQVKTWFQNQRMKSKRWQ). Tandem repeats lie at residues 196–200 (WSNQT), 201–205 (WNNST), 206–210 (WSNQT), 216–220 (WSNHS), 221–225 (WNTQT), 226–230 (WCTQS), 231–235 (WNNQA), and 236–240 (WNSPF). The tract at residues 196-240 (WSNQTWNNSTWSNQTQNIQSWSNHSWNTQTWCTQSWNNQAWNSPF) is 8 X repeats starting with a Trp in each unit. Residues 196-240 (WSNQTWNNSTWSNQTQNIQSWSNHSWNTQTWCTQSWNNQAWNSPF) are sufficient for transactivation activity. The interval 241 to 305 (YNCGEESLQS…YSMNMQPEDV (65 aa)) is sufficient for strong transactivation activity.

It belongs to the Nanog homeobox family.

The protein localises to the nucleus. Its function is as follows. May act as a transcription regulator. When overexpressed, promotes entry of cells into S phase and cell proliferation. This Homo sapiens (Human) protein is Homeobox protein NANOGP8 (NANOGP8).